Reading from the N-terminus, the 857-residue chain is Facilitated trehalose transporter Tret1-1 (857 aa).

Disordered stretches follow at residues 1 to 28 and 62 to 203; these read MSGR…KLKE and DPFL…KATS. The Cytoplasmic portion of the chain corresponds to 1–392; the sequence is MSGRDSRGAG…VYRPTTNPIY (392 aa). The segment covering 69-81 has biased composition (polar residues); sequence VSPQRHPQNTVRT. Positions 134–143 are enriched in basic and acidic residues; that stretch reads EIREHRDRQQ. Residues 171–181 show a composition bias toward polar residues; the sequence is GNSNTNSNKAA. A phosphoserine mark is found at serine 248, serine 249, serine 250, serine 320, and serine 322. A disordered region spans residues 327 to 346; the sequence is LTSRQHFQQQRSISTDSRKS. Positions 330-341 are enriched in polar residues; it reads RQHFQQQRSIST. The helical transmembrane segment at 393–413 threads the bilayer; the sequence is IWTQVLAALSVSLGSLVVGFV. The Extracellular segment spans residues 414–440; that stretch reads SAYTSPALVSMTDRNITSFEVTQDAGS. N-linked (GlcNAc...) asparagine glycosylation is present at asparagine 428. Residues 441–461 form a helical membrane-spanning segment; the sequence is WVGGIMPLAGLAGGIAGGPLI. At 462 to 473 the chain is on the cytoplasmic side; the sequence is EYLGRRNTILAT. A helical transmembrane segment spans residues 474–494; it reads AVPFIVSSLLIACAVNVAMVL. Residues 495-497 are Extracellular-facing; that stretch reads CGR. The chain crosses the membrane as a helical span at residues 498–518; that stretch reads FLAGFCVGIASLSLPVYLGET. Topologically, residues 519 to 528 are cytoplasmic; it reads VQPEVRGTLG. A helical transmembrane segment spans residues 529–549; that stretch reads LLPTAFGNIGILLCFVAGSFM. An N-linked (GlcNAc...) asparagine glycan is attached at asparagine 550. Residues 550–552 lie on the Extracellular side of the membrane; it reads NWS. The chain crosses the membrane as a helical span at residues 553 to 573; sequence MLAFLGAALPVPFLILMFLIP. The Cytoplasmic segment spans residues 574–636; sequence ETPRWFVGRG…ELFKRINLKP (63 aa). Residues 637–657 traverse the membrane as a helical segment; sequence LSISLGLMFFQQFSGINAVIF. The Extracellular portion of the chain corresponds to 658–673; the sequence is YTVQIFKDAGSTIDSN. A helical transmembrane segment spans residues 674–694; that stretch reads LCTIIVGIVNFFATFMGILLI. The Cytoplasmic portion of the chain corresponds to 695–700; the sequence is DRLGRK. Residues 701–721 form a helical membrane-spanning segment; the sequence is ILLYISDIAMILTLSILGGFF. Residues 722–740 lie on the Extracellular side of the membrane; the sequence is YCKAHGPDVSHLGWLPLTC. The chain crosses the membrane as a helical span at residues 741-761; the sequence is FVIYILGFSLGFGPIPWLMMG. Residues 762–770 are Cytoplasmic-facing; sequence EILPAKIRG. Residues 771-791 traverse the membrane as a helical segment; it reads PAASVVTAFNWFCTFVVTKTF. At 792–801 the chain is on the extracellular side; that stretch reads QDLTGAMGAH. The chain crosses the membrane as a helical span at residues 802 to 822; sequence GAFWLFGAICFVGLFFVIIYV. At 823-857 the chain is on the cytoplasmic side; the sequence is PETQGKTLEDIERKMMGRVRRMSSVANIKPLSFNM. Phosphoserine is present on residues serine 845 and serine 846.

The protein belongs to the major facilitator superfamily. Sugar transporter (TC 2.A.1.1) family. Trehalose transporter subfamily.

Its subcellular location is the cell membrane. Functionally, low-capacity facilitative transporter for trehalose. Does not transport maltose, sucrose or lactose. Mediates the bidirectional transfer of trehalose. Responsible for the transport of trehalose synthesized in the fat body and the incorporation of trehalose into other tissues that require a carbon source, thereby regulating trehalose levels in the hemolymph. In Drosophila simulans (Fruit fly), this protein is Facilitated trehalose transporter Tret1-1.